We begin with the raw amino-acid sequence, 188 residues long: Crossover junction endodeoxyribonuclease RuvC (188 aa).

Catalysis depends on residues Asp-7, Glu-68, and Asp-141. Asp-7, Glu-68, and Asp-141 together coordinate Mg(2+).

Belongs to the RuvC family. Homodimer which binds Holliday junction (HJ) DNA. The HJ becomes 2-fold symmetrical on binding to RuvC with unstacked arms; it has a different conformation from HJ DNA in complex with RuvA. In the full resolvosome a probable DNA-RuvA(4)-RuvB(12)-RuvC(2) complex forms which resolves the HJ. It depends on Mg(2+) as a cofactor.

The protein resides in the cytoplasm. It catalyses the reaction Endonucleolytic cleavage at a junction such as a reciprocal single-stranded crossover between two homologous DNA duplexes (Holliday junction).. Functionally, the RuvA-RuvB-RuvC complex processes Holliday junction (HJ) DNA during genetic recombination and DNA repair. Endonuclease that resolves HJ intermediates. Cleaves cruciform DNA by making single-stranded nicks across the HJ at symmetrical positions within the homologous arms, yielding a 5'-phosphate and a 3'-hydroxyl group; requires a central core of homology in the junction. The consensus cleavage sequence is 5'-(A/T)TT(C/G)-3'. Cleavage occurs on the 3'-side of the TT dinucleotide at the point of strand exchange. HJ branch migration catalyzed by RuvA-RuvB allows RuvC to scan DNA until it finds its consensus sequence, where it cleaves and resolves the cruciform DNA. In Mycobacterium leprae (strain TN), this protein is Crossover junction endodeoxyribonuclease RuvC.